A 343-amino-acid chain; its full sequence is Heat-inducible transcription repressor HrcA (343 aa).

This sequence belongs to the HrcA family.

Functionally, negative regulator of class I heat shock genes (grpE-dnaK-dnaJ and groELS operons). Prevents heat-shock induction of these operons. The polypeptide is Heat-inducible transcription repressor HrcA (Thermoanaerobacter sp. (strain X514)).